Here is a 1989-residue protein sequence, read N- to C-terminus: Zinc finger C3H1 domain-containing protein (1989 aa).

Disordered regions lie at residues 1 to 133 (MATA…RPSF), 148 to 218 (GRPY…SKNE), 251 to 290 (SSKE…PEEK), and 310 to 365 (LPGD…LGED). Residue A2 is modified to N-acetylalanine. A phosphoserine mark is found at S15, S28, and S34. The segment covering 20 to 32 (GELEDGEISDDDN) has biased composition (acidic residues). A compositionally biased stretch (low complexity) spans 33–44 (NSQIRSRSSSSS). Gly residues predominate over residues 62–72 (RGGGSGGGGGS). Composition is skewed to low complexity over residues 114 to 132 (PPSV…PRPS), 183 to 192 (GFSSSQSWRE), and 201 to 210 (KSFGRSPSRK). Position 128 is a phosphoserine (S128). Positions 219–259 (NCVEETFEDLLLKYKQIQLELECINKDEKLALSSKEENVQE) form a coiled coil. Position 251 is a phosphoserine (S251). Residues 251–262 (SSKEENVQEDPK) show a composition bias toward basic and acidic residues. Residues 266–279 (FEDQTSTDNVSITK) show a composition bias toward polar residues. Positions 280–290 (DSSKEVAPEEK) are enriched in basic and acidic residues. Over residues 330-340 (KSDTTDSSQGL) the composition is skewed to polar residues. 2 positions are modified to phosphoserine: S352 and S383. Positions 358–389 (SEKKLGEDEEELSELQLRLLALQSASKKWQQK) form a coiled coil. Disordered stretches follow at residues 385 to 671 (KWQQ…SNLS) and 711 to 770 (LNDS…PEAL). Basic and acidic residues predominate over residues 392–402 (QVMKESKEKLT). Positions 430 to 440 (ALRKQQTKAWK) are enriched in basic residues. The stretch at 432 to 487 (RKQQTKAWKKLQQQKEQERQKEEDQRKQAEEEERRKREEEIRKIRDLSNQEEQYNR) forms a coiled coil. 2 stretches are compositionally biased toward basic and acidic residues: residues 444 to 479 (QQKE…RDLS) and 501 to 515 (KSSD…DKQP). Over residues 527–537 (NYEEVAMDTDS) the composition is skewed to acidic residues. Low complexity predominate over residues 574–583 (VSSLPPLSQP). Residues 594–616 (PLPPLPPLPPLPPEDPEQPPKPP) show a composition bias toward pro residues. The segment covering 647-671 (TSSNSDPPSPPVLNNSHPVPRSNLS) has biased composition (polar residues). Residues S662, S714, S717, and S719 each carry the phosphoserine modification. The span at 755–770 (PKSEKENDPLRTPEAL) shows a compositional bias: basic and acidic residues. T766 carries the post-translational modification Phosphothreonine. S805 and S809 each carry phosphoserine. Residues 847-909 (LKNLVQQEAK…QQRVTIKKAL (63 aa)) adopt a coiled-coil conformation. A phosphoserine mark is found at S948, S949, and S953. The stretch at 965 to 989 (EKRRLQKLEYEYALKIQKLKEARAL) forms a coiled coil. Phosphoserine occurs at positions 998 and 1046. The C3H1-type zinc-finger motif lies at 1185 to 1206 (FCRFDLTGTCNDDDCQWQHIQD). 3 positions are modified to phosphoserine: S1301, S1303, and S1304. 7 TPR repeats span residues 1361 to 1400 (VQLW…NKDN), 1401 to 1434 (PEIW…APDY), 1438 to 1471 (WTFL…ETSN), 1478 to 1511 (LEAL…ANDG), 1602 to 1635 (LPLY…CPIN), 1636 to 1669 (CQLL…NPQN), and 1745 to 1778 (PYLW…AMRC).

As to quaternary structure, component of the poly(A) tail exosome targeting (PAXT) complex made of accessory factors, such as PABPN1, ZFC3H1 and MTREX, and which directs a subset of long and polyadenylated poly(A) RNAs for exosomal degradation. Co-localizes with component of the CBC-ARS2 (CBCA) complex. Binds to RNA exosome components. Interacts with NCBP1/CBP80, ZC3H18, MTREX and PABPN1 in a RNase-insensitive manner, and with PABPC4, PABPC1 and ZC3H14 in a RNase-sensitive manner.

It localises to the nucleus. Functionally, subunit of the trimeric poly(A) tail exosome targeting (PAXT) complex, a complex that directs a subset of long and polyadenylated poly(A) RNAs for exosomal degradation. The RNA exosome is fundamental for the degradation of RNA in eukaryotic nuclei. Substrate targeting is facilitated by its cofactor MTREX, which links to RNA-binding protein adapters. The protein is Zinc finger C3H1 domain-containing protein (ZFC3H1) of Homo sapiens (Human).